The sequence spans 307 residues: Junctional adhesion molecule 2A (307 aa).

Positions 1-18 are cleaved as a signal peptide; it reads MLVCVSLLILIHSVPVSP. The 94-residue stretch at 19-112 folds into the Ig-like V-type domain; the sequence is VTVSSRNPKV…EVSAPSDSIS (94 aa). The Extracellular portion of the chain corresponds to 19–226; the sequence is VTVSSRNPKV…FQTHDLNVAA (208 aa). 2 disulfides stabilise this stretch: cysteine 40–cysteine 102 and cysteine 147–cysteine 197. The region spanning 126-225 is the Ig-like C2-type domain; the sequence is PQTPSCDVPS…TFQTHDLNVA (100 aa). The helical transmembrane segment at 227-247 threads the bilayer; the sequence is VVSAVVLVCVILFLCAFGVCL. Over 248 to 307 the chain is Cytoplasmic; that stretch reads AHRQGYFSRHRGRSFWIPHCHGVTHISSQNLNPSEHTQHSGYSHPPKEPQDFKHTQSFML. Positions 278–288 are enriched in polar residues; it reads LNPSEHTQHSG. Residues 278–307 form a disordered region; it reads LNPSEHTQHSGYSHPPKEPQDFKHTQSFML. Over residues 292-301 the composition is skewed to basic and acidic residues; the sequence is PPKEPQDFKH.

The protein belongs to the immunoglobulin superfamily.

The protein localises to the cell membrane. The protein resides in the cell junction. It localises to the tight junction. Junctional adhesion protein that mediates heterotypic cell-cell interactions to regulate different cellular processes. During myogenesis, it is involved in myocyte fusion through the binding of jam3b on neighboring myocytes. The protein is Junctional adhesion molecule 2A (jam2a) of Danio rerio (Zebrafish).